The chain runs to 190 residues: Putative resolvase R771 (190 aa).

Residues 11-30 (SSVLGVHQRTLYQWDKKGWI) constitute a DNA-binding region (H-T-H motif). The region spanning 61-190 (LSICYVRVSS…RNGLKKYSNK (130 aa)) is the Resolvase/invertase-type recombinase catalytic domain. Residues 66 to 92 (VRVSSNNQKDDLERQIKFMKKKYPNHT) adopt a coiled-coil conformation. The active-site O-(5'-phospho-DNA)-serine intermediate is Ser69.

It belongs to the site-specific recombinase resolvase family.

Resolvase catalyzes the resolution (a site-specific recombination) of the cointegrated replicon to yield the final transposition products. The polypeptide is Putative resolvase R771 (Acanthamoeba polyphaga (Amoeba)).